We begin with the raw amino-acid sequence, 86 residues long: Large ribosomal subunit protein bL27 (86 aa).

The disordered stretch occupies residues 1–24 (MAHKKAGGSTRNGRDSESKRLGVK).

The protein belongs to the bacterial ribosomal protein bL27 family.

The chain is Large ribosomal subunit protein bL27 from Alcanivorax borkumensis (strain ATCC 700651 / DSM 11573 / NCIMB 13689 / SK2).